A 271-amino-acid chain; its full sequence is Putative phosphoenolpyruvate synthase regulatory protein (271 aa).

ADP is bound at residue 151 to 158 (GVSRSGKT).

It belongs to the pyruvate, phosphate/water dikinase regulatory protein family. PSRP subfamily.

It carries out the reaction [pyruvate, water dikinase] + ADP = [pyruvate, water dikinase]-phosphate + AMP + H(+). The catalysed reaction is [pyruvate, water dikinase]-phosphate + phosphate + H(+) = [pyruvate, water dikinase] + diphosphate. In terms of biological role, bifunctional serine/threonine kinase and phosphorylase involved in the regulation of the phosphoenolpyruvate synthase (PEPS) by catalyzing its phosphorylation/dephosphorylation. This Burkholderia vietnamiensis (strain G4 / LMG 22486) (Burkholderia cepacia (strain R1808)) protein is Putative phosphoenolpyruvate synthase regulatory protein.